The following is a 117-amino-acid chain: uncharacterized protein (117 aa).

Residues 5–50 (DKIHNTNEQITALEKKKYQIETTLLEKQRDLLKLETQQNKAKLELL) are a coiled coil.

This is an uncharacterized protein from Bacillus pumilus (Bacillus mesentericus).